Here is a 274-residue protein sequence, read N- to C-terminus: NAD(P)H dehydrogenase [quinone] 1 (274 aa).

FAD-binding positions include H12, F18–N19, and Q67. Phosphoserine is present on S82. FAD is bound at residue L104 to F107. A substrate-binding site is contributed by A126–T128. Residues T148–G151, Y156, and R201 contribute to the FAD site. The segment at P225–K274 is important for apoenzyme conformational stability. Residues K250 and K251 each participate in a glycyl lysine isopeptide (Lys-Gly) (interchain with G-Cter in SUMO2) cross-link.

Belongs to the NAD(P)H dehydrogenase (quinone) family. In terms of assembly, homodimer. Interacts with PDLIM4 isoform 2; this interaction stabilizes PDLIM4 isoform 2 in response to oxidative stress and protects it from ubiquitin-independent degradation by the core 20S proteasome. Interacts with TP73 (via SAM domain); this interaction is NADH-dependent, stabilizes TP73 in response to oxidative stress and protects it from ubiquitin-independent degradation by the 20S proteasome. Interacts with TP53; this interaction is NADH-dependent, stabilizes TP53 in response to oxidative stress and protects it from ubiquitin-independent degradation by the 20S proteasome. Requires FAD as cofactor.

Its subcellular location is the cytoplasm. The protein localises to the cytosol. The catalysed reaction is a quinone + NADH + H(+) = a quinol + NAD(+). It carries out the reaction a quinone + NADPH + H(+) = a quinol + NADP(+). The enzyme catalyses ubiquinone-10 + NADH + H(+) = ubiquinol-10 + NAD(+). It catalyses the reaction menadione + NADH + H(+) = menadiol + NAD(+). Its activity is regulated as follows. Inhibited by dicoumarol. In terms of biological role, flavin-containing quinone reductase that catalyzes two-electron reduction of quinones to hydroquinones using either NADH or NADPH as electron donors. In a ping-pong kinetic mechanism, the electrons are sequentially transferred from NAD(P)H to flavin cofactor and then from reduced flavin to the quinone, bypassing the formation of semiquinone and reactive oxygen species. Regulates cellular redox state primarily through quinone detoxification. Reduces components of plasma membrane redox system such as coenzyme Q and vitamin quinones, producing antioxidant hydroquinone forms. In the process may function as superoxide scavenger to prevent hydroquinone oxidation and facilitate excretion. Alternatively, can activate quinones and their derivatives by generating redox reactive hydroquinones with DNA cross-linking antitumor potential. Acts as a gatekeeper of the core 20S proteasome known to degrade proteins with unstructured regions. Upon oxidative stress, interacts with tumor suppressors TP53 and TP73 in a NADH-dependent way and inhibits their ubiquitin-independent degradation by the 20S proteasome. This Homo sapiens (Human) protein is NAD(P)H dehydrogenase [quinone] 1.